Consider the following 155-residue polypeptide: SsrA-binding protein (155 aa).

Belongs to the SmpB family.

The protein localises to the cytoplasm. Required for rescue of stalled ribosomes mediated by trans-translation. Binds to transfer-messenger RNA (tmRNA), required for stable association of tmRNA with ribosomes. tmRNA and SmpB together mimic tRNA shape, replacing the anticodon stem-loop with SmpB. tmRNA is encoded by the ssrA gene; the 2 termini fold to resemble tRNA(Ala) and it encodes a 'tag peptide', a short internal open reading frame. During trans-translation Ala-aminoacylated tmRNA acts like a tRNA, entering the A-site of stalled ribosomes, displacing the stalled mRNA. The ribosome then switches to translate the ORF on the tmRNA; the nascent peptide is terminated with the 'tag peptide' encoded by the tmRNA and targeted for degradation. The ribosome is freed to recommence translation, which seems to be the essential function of trans-translation. The sequence is that of SsrA-binding protein from Streptococcus uberis (strain ATCC BAA-854 / 0140J).